A 204-amino-acid chain; its full sequence is N-(5'-phosphoribosyl)anthranilate isomerase (204 aa).

The protein belongs to the TrpF family.

The enzyme catalyses N-(5-phospho-beta-D-ribosyl)anthranilate = 1-(2-carboxyphenylamino)-1-deoxy-D-ribulose 5-phosphate. The protein operates within amino-acid biosynthesis; L-tryptophan biosynthesis; L-tryptophan from chorismate: step 3/5. The sequence is that of N-(5'-phosphoribosyl)anthranilate isomerase from Desulforudis audaxviator (strain MP104C).